A 498-amino-acid polypeptide reads, in one-letter code: MHLERDKVYDAPEGEVWSTVKPASTHNSAAPKRLAQRWNHRWSDESLTQGVSPLKDSSKTVKASTTIPLGTGRPTALYYPWQSVSMAGTEASRQPRGLKPTLAGNMTCSKGEAAFDLSSALNYGEPSGWSQLVAFFRETTGRVHRPPYADWDTTLTCGSTSAVDLVLRMFCNRGDCVLAERFTYPGTLMASRAQGLRTVGIAMDADGLVPEALDAALRGWDAASRGRKPFVLYTIPSGHNPTGVTQSAARKRAVYQVAERHDLLIVEDDPYFFLRLGRGGGGESLPTSYLSLDTAGRVVRVESTSKILAPGLRCGWLTASRQVVDMFGNFAEVGPSSPAGPSQAMLYKLLVESWGPEGFAGWLDYLSGEYGRRRDVMVAACERHLPREVCAWTAPTHGMFLWVGAALERHPRYQESGARDQDRDADADAELCRAVEDGICARAEANGVLVARGSWCRVGGGADRAFFRMTFVATAEAADLERGVAQFGRAVRDEFGLG.

It belongs to the class-I pyridoxal-phosphate-dependent aminotransferase family. The cofactor is pyridoxal 5'-phosphate.

The protein operates within mycotoxin biosynthesis. Aminotransferase; part of the gene cluster that mediates the biosynthesis of swainsonine (SW), a cytotoxic fungal alkaloid and a potential cancer therapy drug. Swainsonine production occurs via a multibranched pathway and is dispensable for fungal colonization of plants and infection of insect hosts. The first step of swainsonine biosynthesis is the production of the precursor pipecolic acid (PA) via conversion of L-lysine (Lys) to 1-piperideine-6-carboxylate (P6C) by the aminotransferase swnA, the latter being further reduced to PA by the reductase swnR. PA can be converted from lysine by both the SW biosynthetic cluster and the unclustered genes such as lysine cyclodeaminase. The PKS-NRPS hybrid synthetase swnK uptakes and condensates PA and malonyl-CoA with and without skipping of the ketoreductase (KR) domain in order to produce 3 intermediates, 1-oxoindolizidine, (1S)-1-hydroxyindolizin, and (1R)-1-hydroxyindolizine; with the transisomer (1S)-1-hydroxyindolizin being predominant. The terminal thioester reductase (TE) domain of swnK is involved in reduction of the thioester bond to release the intermediate aldehydes. The oxidoreductase swnN could contribute to the reduction of 1-oxoindolizidine to (1S)-1-hydroxyindolizin and (1R)-1-hydroxyindolizine, contributing to the major route of SW production. The dioxygenase swnH2 would be responsible for the oxidization of (1R)-1-hydroxyindolizine into (1R,2S)-1,2-dihydroxyindolizine and of (1S)-1-hydroxyindolizin to yield both (1R,2S)-1,2-dihydroxyindolizine and (1S,2S)-1,2-dihydroxyindolizine. The dioxygenase swnH1 then performs the conversion of the 1,2-dihydroxyindolizine epimers to SW. The polypeptide is Aminotransferase swnA (Metarhizium robertsii (strain ARSEF 23 / ATCC MYA-3075) (Metarhizium anisopliae (strain ARSEF 23))).